A 263-amino-acid chain; its full sequence is Probable HTH-type transcriptional regulator ArcR (263 aa).

In terms of domain architecture, HTH iclR-type spans Ile-14 to Asp-74. The segment at residues Leu-35–Ala-54 is a DNA-binding region (H-T-H motif). The 174-residue stretch at Leu-89–Thr-262 folds into the IclR-ED domain.

Probably regulates transcription of the arcABC operon. This chain is Probable HTH-type transcriptional regulator ArcR (arcR), found in Halobacterium salinarum (strain ATCC 29341 / DSM 671 / R1).